We begin with the raw amino-acid sequence, 5193 residues long: Usherin (5193 aa).

Residues 1-34 (MHYLALSPGFLCYTIKTLILAYLASVLVLAASQG) form the signal peptide. At 35 to 5033 (VFPRLENVGA…KSTEFYSELW (4999 aa)) the chain is on the extracellular side. 7 N-linked (GlcNAc...) asparagine glycosylation sites follow: asparagine 230, asparagine 258, asparagine 274, asparagine 358, asparagine 415, asparagine 448, and asparagine 469. Residues 268–514 (QDFRLYNVSL…AVDEIIVSGR (247 aa)) form the Laminin N-terminal domain. 24 disulfide bridges follow: cysteine 515-cysteine 524, cysteine 517-cysteine 533, cysteine 535-cysteine 546, cysteine 549-cysteine 569, cysteine 572-cysteine 581, cysteine 574-cysteine 602, cysteine 605-cysteine 614, cysteine 617-cysteine 635, cysteine 638-cysteine 652, cysteine 640-cysteine 659, cysteine 661-cysteine 670, cysteine 673-cysteine 688, cysteine 691-cysteine 705, cysteine 693-cysteine 712, cysteine 714-cysteine 723, cysteine 726-cysteine 741, cysteine 744-cysteine 756, cysteine 746-cysteine 763, cysteine 765-cysteine 774, cysteine 777-cysteine 789, cysteine 792-cysteine 805, cysteine 794-cysteine 812, cysteine 814-cysteine 823, and cysteine 826-cysteine 846. 10 Laminin EGF-like domains span residues 515-571 (CQCH…NCKP), 572-637 (CQCH…ACKL), 638-690 (CDCN…GCRP), 691-743 (CNCN…GCEP), 744-791 (CQCN…ACEV), 792-848 (CDCS…NCEK), 853-896 (NGSL…GCQA), 897-947 (CDCD…GCLP), 948-998 (CLCH…RCRP), and 999-1049 (CHCH…GCSK). N-linked (GlcNAc...) asparagine glycosylation occurs at asparagine 647. Residues asparagine 836 and asparagine 853 are each glycosylated (N-linked (GlcNAc...) asparagine). Intrachain disulfides connect cysteine 867/cysteine 876, cysteine 879/cysteine 894, cysteine 897/cysteine 910, cysteine 899/cysteine 917, cysteine 919/cysteine 928, cysteine 931/cysteine 945, cysteine 948/cysteine 960, cysteine 950/cysteine 967, cysteine 969/cysteine 979, cysteine 982/cysteine 996, cysteine 999/cysteine 1011, cysteine 1001/cysteine 1018, cysteine 1020/cysteine 1029, and cysteine 1032/cysteine 1047. Asparagine 885 is a glycosylation site (N-linked (GlcNAc...) asparagine). A glycan (N-linked (GlcNAc...) asparagine) is linked at asparagine 941. The N-linked (GlcNAc...) asparagine glycan is linked to asparagine 1008. Fibronectin type-III domains follow at residues 1055-1143 (PPPR…TKPE), 1147-1241 (GHLN…APPQ), 1242-1357 (TQGP…SVPV), 1358-1462 (FMAP…AAPA), and 1463-1566 (QLRP…LQLK). Residues asparagine 1068, asparagine 1089, asparagine 1150, asparagine 1171, and asparagine 1222 are each glycosylated (N-linked (GlcNAc...) asparagine). Asparagine 1382, asparagine 1473, and asparagine 1626 each carry an N-linked (GlcNAc...) asparagine glycan. Laminin G-like domains lie at 1511–1700 (TKGT…WEGC) and 1705–1882 (EEGV…QDGC). Cysteines 1663 and 1700 form a disulfide. Asparagine 1770 is a glycosylation site (N-linked (GlcNAc...) asparagine). Fibronectin type-III domains lie at 1847–1946 (EPGF…TAPQ), 1948–2045 (VPTP…TPQE), 2046–2132 (APQE…TAQL), 2133–2234 (PPEQ…IPEG), 2235–2321 (VPAP…APPE), 2322–2421 (GVVN…SVEM), 2422–2525 (PPGA…DKPG), 2526–2613 (PIDA…TLPG), 2617–2713 (GIPS…TRPC), 2717–2810 (GVQP…THPA), 2811–2914 (PPQE…TLAG), 2918–3009 (RGAT…MWEE), and 3013–3103 (GMLP…TPSD). Cysteines 1853 and 1882 form a disulfide. Asparagine 1894 carries N-linked (GlcNAc...) asparagine glycosylation. Residues 1931-1955 (VSSDWSRGRTLGTAPQSVPTPSRAQ) are disordered. Residues 1943–1955 (TAPQSVPTPSRAQ) show a composition bias toward polar residues. 10 N-linked (GlcNAc...) asparagine glycosylation sites follow: asparagine 1958, asparagine 2095, asparagine 2121, asparagine 2177, asparagine 2186, asparagine 2249, asparagine 2276, asparagine 2313, asparagine 2368, and asparagine 2404. Residues asparagine 2575, asparagine 2647, asparagine 2701, asparagine 2761, and asparagine 2779 are each glycosylated (N-linked (GlcNAc...) asparagine). N-linked (GlcNAc...) asparagine glycans are attached at residues asparagine 2928, asparagine 2998, asparagine 3023, asparagine 3090, asparagine 3208, asparagine 3322, and asparagine 3411. Fibronectin type-III domains lie at 3395–3489 (CPAT…TRED), 3490–3580 (VPEG…TTQR), 3581–3671 (SPEN…TLQA), 3672–3766 (APQG…TPED), 3769–3857 (PPCN…TLEA), 3858–3955 (APVG…TLEA), 3956–4059 (PPRG…SAPS), 4060–4148 (GLMN…APPD), 4149–4256 (TQMA…APPD), 4257–4346 (GLSP…TPEV), 4347–4437 (PPSE…APPE), 4438–4522 (NMDP…TSPS), 4523–4625 (APSG…VPPL), 4628–4725 (PAPH…TGPA), 4726–4818 (PPEG…THPA), 4819–4921 (PPSG…TKKE), and 4922–5005 (MPQY…YDAA). N-linked (GlcNAc...) asparagine glycans are attached at residues asparagine 3589, asparagine 3645, asparagine 3686, asparagine 3712, asparagine 3723, and asparagine 3772. Asparagine 3976, asparagine 4063, asparagine 4194, asparagine 4218, asparagine 4304, asparagine 4340, asparagine 4365, and asparagine 4410 each carry an N-linked (GlcNAc...) asparagine glycan. N-linked (GlcNAc...) asparagine glycans are attached at residues asparagine 4556, asparagine 4575, asparagine 4683, asparagine 4716, asparagine 4746, asparagine 4756, asparagine 4765, asparagine 4915, and asparagine 4934. The helical transmembrane segment at 5034 to 5054 (FIMVMAVVGLILLAIFLSLIL) threads the bilayer. Over 5055–5193 (QRKIHKEPCI…EHTAFTDTHL (139 aa)) the chain is Cytoplasmic. The PDZ-binding motif lies at 5191 to 5193 (THL).

Interacts with collagen IV and fibronectin via its laminin EGF-like domains. Interaction with collagen may be required for stable integration into the basement membrane. Interacts with NINL. Interacts with USH1C. Component of USH2 complex, composed of ADGRV1, PDZD7, USH2A and WHRN. Interacts with ADGRV1/MASS1 (via N-terminal PDZ domain). Interacts (via the cytoplasmic region) with WHRN. Interacts (via the cytoplasmic region) with PDZD7. Interacts (via the cytoplasmic region) with VEZT and MYO7A (via MyTH4-FERM domains); the interaction associates VEZT with the USH2 complex at the stereocilia base. In terms of tissue distribution, present in the testis, epididymis, oviduct, spleen, submaxillary gland, and small and large intestines. Not detected in the brain, skin, lung, skeletal muscle, cardiac muscle, liver or kidney. Expressed in smooth muscle of the colon and the epididymis. Also present in select vascular basement membranes. In the cochlea, it is present in virtually every basement membrane. It is particularly high in the strial capillary basement membranes (SCBMs). In the retina, it is again expressed in all of the basement membranes. It is also very prevalent in the lens capsule and the Bruch's layer between the retinal pigment epithelium and the choroid layer, which is very rich in basement membranes. In neonates in it is widely expressed in the basement membranes of the cochlea. Present in the synaptic terminals of retinal photoreceptors (at protein level).

Its subcellular location is the cell projection. It localises to the stereocilium membrane. The protein localises to the photoreceptor inner segment. It is found in the secreted. In terms of biological role, involved in hearing and vision as member of the USH2 complex. In the inner ear, required for the maintenance of hair bundle ankle formation, which connects growing stereocilia in developing cochlear hair cells. In retina photoreceptors, the USH2 complex is required for the maintenance of periciliary membrane complex that seems to play a role in regulating intracellular protein transport. The chain is Usherin (Ush2A) from Mus musculus (Mouse).